A 479-amino-acid polypeptide reads, in one-letter code: Glutamyl-tRNA(Gln) amidotransferase subunit A (479 aa).

Residues Lys75 and Ser150 each act as charge relay system in the active site. Ser174 serves as the catalytic Acyl-ester intermediate.

It belongs to the amidase family. GatA subfamily. As to quaternary structure, heterotrimer of A, B and C subunits.

The enzyme catalyses L-glutamyl-tRNA(Gln) + L-glutamine + ATP + H2O = L-glutaminyl-tRNA(Gln) + L-glutamate + ADP + phosphate + H(+). In terms of biological role, allows the formation of correctly charged Gln-tRNA(Gln) through the transamidation of misacylated Glu-tRNA(Gln) in organisms which lack glutaminyl-tRNA synthetase. The reaction takes place in the presence of glutamine and ATP through an activated gamma-phospho-Glu-tRNA(Gln). This is Glutamyl-tRNA(Gln) amidotransferase subunit A from Synechococcus elongatus (strain ATCC 33912 / PCC 7942 / FACHB-805) (Anacystis nidulans R2).